Consider the following 923-residue polypeptide: MKHQVLLPLLVTTAIIAGSVGVYTHSKPLLGQSQDQVLPPFTPPLQNGHIDLQGKYIVSTLDQVNATHINIYANYNGPEASYAMPKNKLITHILVSIVINDVNQLGIKITDRTYRHFEVPYSNLFPHDKVFNFPANNQFDITLPKRGEAFYLTIKRKDTGEVVFDTNNQFFVYSDLYHEFTVAMQNEFIYGLGERRNKQFLYDSGEYTFLNKDQYESVADGHPDQQTYGTHPMYLRRENSGNFHVVFLRNYNSIQAVYSKGKSLTYKVVGGLLEFKIFLGDKSPETSLKLYHSYVNGFNLHPFWAHGFHQCRWGYKTSEMMTTVWDTFNTNGLPFDTIWSDIDYMKDLTDFTIDTSRYDKAQMNTMLDRSVAAGVHWVPIIDAGIALGDVSNERGKELGVYQKSNKTGEDLIGCVWPGKVNYPDFNHPLSQEFWAEGLMNLTKNYGITPSGFWIDMNEFSNFINGEISEDQNCIMPGDTTTNPNYLGNSVEDFYTRIPFEVGGADHPQQEKTMSYDAPKYNYADAKTVYIPNYELREFDFHNLNGFSEGIATNYALKKMGNKLPFIISRSQIAGSGQFVQHWTGDNGSQWDFLQYSLGEIFNFNMYGIPMTGADICGFAQNTTAELCARWMQVGAFYPFSRNHNSNDTIPQEPYAFPDSTYVLDSSKKSLRLRYALLKQYYSHFVSSNGVGTVFRPTFFNFPDDASLLTNDQQFMIGDSLLGQPVLVQSATPARFSHSSYLTFPSSGAFYDFVTDVATLNAQRYTNANNGQIKNVKFDDIMPLYIREGYTVFTQLASTALRSRLLDSNFELHVALAKSGTSYTAKGKFITIQDYSDDNLIQKCIGANNCSFDIQVTGVVNGANLDLTIQIAGESAQTNFETINVNKIIPYAADLKFAASTATFTISKNGTINASIPLQAAQQE.

Positions 1–17 (MKHQVLLPLLVTTAIIA) are cleaved as a signal peptide. Residues 18-36 (GSVGVYTHSKPLLGQSQDQ) constitute a propeptide that is removed on maturation. N-linked (GlcNAc...) asparagine glycans are attached at residues Asn-65, Asn-405, and Asn-440. The Nucleophile role is filled by Asp-455. The active site involves Glu-458. Asp-585 serves as the catalytic Proton donor. Residues Asn-586, Asn-621, Asn-646, Asn-848, Asn-908, and Asn-912 are each glycosylated (N-linked (GlcNAc...) asparagine).

It belongs to the glycosyl hydrolase 31 family.

It localises to the lysosome. Its subcellular location is the secreted. It catalyses the reaction Hydrolysis of terminal, non-reducing (1-&gt;4)-linked alpha-D-glucose residues with release of alpha-D-glucose.. In terms of biological role, essential for the degradation of glycogen to glucose in lysosomes. Has both alpha-1,4 and alpha-1,6-glucosidase activity. In Tetrahymena pyriformis, this protein is Lysosomal acid alpha-glucosidase.